Consider the following 366-residue polypeptide: tRNA/tmRNA (uracil-C(5))-methyltransferase (366 aa).

S-adenosyl-L-methionine-binding residues include Q190, Y218, N223, E239, and D299. Residue C324 is the Nucleophile of the active site. The Proton acceptor role is filled by E358.

Belongs to the class I-like SAM-binding methyltransferase superfamily. RNA M5U methyltransferase family. TrmA subfamily.

It catalyses the reaction uridine(54) in tRNA + S-adenosyl-L-methionine = 5-methyluridine(54) in tRNA + S-adenosyl-L-homocysteine + H(+). The enzyme catalyses uridine(341) in tmRNA + S-adenosyl-L-methionine = 5-methyluridine(341) in tmRNA + S-adenosyl-L-homocysteine + H(+). Dual-specificity methyltransferase that catalyzes the formation of 5-methyluridine at position 54 (m5U54) in all tRNAs, and that of position 341 (m5U341) in tmRNA (transfer-mRNA). The sequence is that of tRNA/tmRNA (uracil-C(5))-methyltransferase from Escherichia coli O127:H6 (strain E2348/69 / EPEC).